Consider the following 428-residue polypeptide: Histone-lysine N-methyltransferase SMYD3 (428 aa).

Residue Met1 is modified to N-acetylmethionine. The SET domain maps to Leu4–Leu240. Position 14 to 16 (Arg14 to Asn16) interacts with S-adenosyl-L-methionine. Thr22 bears the Phosphothreonine mark. The Zn(2+) site is built by Cys49, Cys52, Cys62, Cys65, Cys71, Cys75, His83, and Cys87. An MYND-type zinc finger spans residues Cys49–Cys87. Residues Tyr124, Asn132, Asn181, Asn205–His206, Tyr239, and Phe259 each bind S-adenosyl-L-methionine. The C-terminal domain; essential for histone methyltransferase activity, nuclear localization and mediates interaction with HSP90AA1 stretch occupies residues Asp272–Ser428.

It belongs to the class V-like SAM-binding methyltransferase superfamily. Histone-lysine methyltransferase family. As to quaternary structure, interacts with HSPCA. Interacts with HELZ. Interacts with POLR2A; the interaction may be indirect and may be mediated by HELZ. Interacts with HSP90AA1; this interaction enhances SMYD3 histone-lysine N-methyltransferase. In terms of tissue distribution, expressed in skeletal muscles and testis. Overexpressed in a majority of colorectal and hepatocellular carcinomas.

It localises to the cytoplasm. The protein localises to the nucleus. It carries out the reaction L-lysyl(4)-[histone H3] + 3 S-adenosyl-L-methionine = N(6),N(6),N(6)-trimethyl-L-lysyl(4)-[histone H3] + 3 S-adenosyl-L-homocysteine + 3 H(+). Its activity is regulated as follows. Histone methyltransferase activity strongly stimulated by HSPCA. Histone methyltransferase. Specifically methylates 'Lys-4' of histone H3, inducing di- and tri-methylation, but not monomethylation. Also methylates 'Lys-5' of histone H4. Plays an important role in transcriptional activation as a member of an RNA polymerase complex. Binds DNA containing 5'-CCCTCC-3' or 5'-GAGGGG-3' sequences. The sequence is that of Histone-lysine N-methyltransferase SMYD3 (SMYD3) from Homo sapiens (Human).